We begin with the raw amino-acid sequence, 124 residues long: Small ribosomal subunit protein uS13 (124 aa).

The tract at residues 99-124 is disordered; sequence RGQRTRTNARTRKGPRKTVGVMRKKS. A compositionally biased stretch (basic residues) spans 101–124; that stretch reads QRTRTNARTRKGPRKTVGVMRKKS.

This sequence belongs to the universal ribosomal protein uS13 family. Part of the 30S ribosomal subunit. Forms a loose heterodimer with protein S19. Forms two bridges to the 50S subunit in the 70S ribosome.

Its function is as follows. Located at the top of the head of the 30S subunit, it contacts several helices of the 16S rRNA. In the 70S ribosome it contacts the 23S rRNA (bridge B1a) and protein L5 of the 50S subunit (bridge B1b), connecting the 2 subunits; these bridges are implicated in subunit movement. Contacts the tRNAs in the A and P-sites. The polypeptide is Small ribosomal subunit protein uS13 (Caldicellulosiruptor bescii (strain ATCC BAA-1888 / DSM 6725 / KCTC 15123 / Z-1320) (Anaerocellum thermophilum)).